A 372-amino-acid chain; its full sequence is MFNENPIKRRPSTRIYVGNVPIGDGAPIAVQSMTNTRTTDVAATVAQIRALENVGADIVRVSVPTMDAAEAFRQIKQQVKVPLVADIHFDYRIALKVAEYGVDCLRINPGNIGNEERIRAVVDCARDKNIPIRIGVNGGSLEKDLMDKYKEPTPEALLESAMRHVDILDRLNFDQFKVSVKASDVFLAVESYRLLAKQIKQPLHLGITEAGGARAGAVKSAVGLGMLLAEGIGDTLRISLAADPVEEVKVGFDILKSLRIRSRGINFIACPSCSRQEFDVISTVNELERRLEDVTTAMDVSIIGCVVNGPGEALVSHLGLAGGHKKSGYYDDGIRQKERFDNDNLVDALEAKIRAKASLMANRIPVQEGDAD.

Positions 270, 273, 305, and 312 each coordinate [4Fe-4S] cluster.

Belongs to the IspG family. Requires [4Fe-4S] cluster as cofactor.

The enzyme catalyses (2E)-4-hydroxy-3-methylbut-2-enyl diphosphate + oxidized [flavodoxin] + H2O + 2 H(+) = 2-C-methyl-D-erythritol 2,4-cyclic diphosphate + reduced [flavodoxin]. Its pathway is isoprenoid biosynthesis; isopentenyl diphosphate biosynthesis via DXP pathway; isopentenyl diphosphate from 1-deoxy-D-xylulose 5-phosphate: step 5/6. Its function is as follows. Converts 2C-methyl-D-erythritol 2,4-cyclodiphosphate (ME-2,4cPP) into 1-hydroxy-2-methyl-2-(E)-butenyl 4-diphosphate. This is 4-hydroxy-3-methylbut-2-en-1-yl diphosphate synthase (flavodoxin) from Shewanella amazonensis (strain ATCC BAA-1098 / SB2B).